Reading from the N-terminus, the 484-residue chain is Hemogen (484 aa).

Residues 1 to 25 show a composition bias toward basic and acidic residues; the sequence is MDLGKDQSHLKHHQTPDPHQEENHS. 2 disordered regions span residues 1–32 and 44–91; these read MDLGKDQSHLKHHQTPDPHQEENHSPEVIGTW and KAEV…PQPQ. Residues 7 to 87 form a necessary for nuclear localization region; the sequence is QSHLKHHQTP…RQQNTELKVE (81 aa). Over residues 61–79 the composition is skewed to basic residues; that stretch reads KKRKQQRTGKGNRRGRKRQ. Residues S123, S159, S181, S188, and S201 each carry the phosphoserine modification. A Phosphothreonine modification is found at T246. Disordered regions lie at residues 265 to 290, 306 to 369, and 386 to 471; these read DVPKGYILDTDQNPAEPEEYNETDQG, EPKD…YSPE, and QETS…ILNE. Over residues 306-320 the composition is skewed to basic and acidic residues; that stretch reads EPKDLSTKTHQESAE. A phosphoserine mark is found at S349 and S353. T360 carries the phosphothreonine modification. Phosphoserine is present on residues S363 and S367. Basic and acidic residues-rich tracts occupy residues 413-428, 438-447, and 454-463; these read YKNKDVPKECFPEPHQ, PKAHQEDAKD, and EMKEKPKEEP.

Expressed in hematopoietic precursor cells, thyroid and spermatids (at protein level). Expressed in bone marrow, testis, thymus. Expressed in prostate cancer and ovarian cancer. Also expressed in thymus and thyroid tumors, non-Hodgkin lymphoma, various leukemia cell lines, peripheral blood mononuclear cells (PBMCs) and bone marrow mononuclear cells (BMMCs) of patients with leukemia.

The protein localises to the nucleus. Regulates the proliferation and differentiation of hematopoietic cells. Overexpression block the TPA-induced megakaryocytic differentiation in the K562 cell model. May also prevent cell apoptosis through the activation of the nuclear factor-kappa B (NF-kB). The sequence is that of Hemogen (HEMGN) from Homo sapiens (Human).